The sequence spans 194 residues: MKNIILASASERRQELLKRILEDFQIIVSDFDESSIPFKDNISSYVMNLAEGKARSVSKKIMDQDNNLVIGCDTLVAFNNKILGKPKDKKDAFEMLQALSGNEHEVYSGLAILDVKSNKIITDFVCTKVKFSKLTSLQIEKYVNTGDPMDKAGAYGIQGKAGVFVENINGCYYNVVGLPLNKLNSMLMEMGVNL.

The active-site Proton acceptor is the Asp-73.

The protein belongs to the Maf family. YhdE subfamily. The cofactor is a divalent metal cation.

It localises to the cytoplasm. It carries out the reaction dTTP + H2O = dTMP + diphosphate + H(+). The enzyme catalyses UTP + H2O = UMP + diphosphate + H(+). Nucleoside triphosphate pyrophosphatase that hydrolyzes dTTP and UTP. May have a dual role in cell division arrest and in preventing the incorporation of modified nucleotides into cellular nucleic acids. This is dTTP/UTP pyrophosphatase from Clostridium botulinum (strain Kyoto / Type A2).